A 443-amino-acid polypeptide reads, in one-letter code: Ribulose bisphosphate carboxylase large chain (443 aa).

Substrate is bound by residues Asn89 and Thr139. The active-site Proton acceptor is the Lys141. Lys143 serves as a coordination point for substrate. Residues Lys167, Asp169, and Glu170 each contribute to the Mg(2+) site. Lys167 is modified (N6-carboxylysine). Residue His260 is the Proton acceptor of the active site. Residues Arg261, His293, and Ser345 each coordinate substrate.

The protein belongs to the RuBisCO large chain family. Type I subfamily. As to quaternary structure, heterohexadecamer of 8 large chains and 8 small chains; disulfide-linked. The disulfide link is formed within the large subunit homodimers. Mg(2+) serves as cofactor. The disulfide bond which can form in the large chain dimeric partners within the hexadecamer appears to be associated with oxidative stress and protein turnover.

The protein resides in the plastid. It localises to the chloroplast. The catalysed reaction is 2 (2R)-3-phosphoglycerate + 2 H(+) = D-ribulose 1,5-bisphosphate + CO2 + H2O. It catalyses the reaction D-ribulose 1,5-bisphosphate + O2 = 2-phosphoglycolate + (2R)-3-phosphoglycerate + 2 H(+). Functionally, ruBisCO catalyzes two reactions: the carboxylation of D-ribulose 1,5-bisphosphate, the primary event in carbon dioxide fixation, as well as the oxidative fragmentation of the pentose substrate in the photorespiration process. Both reactions occur simultaneously and in competition at the same active site. This is Ribulose bisphosphate carboxylase large chain from Villarsia calthifolia (Marsh flower).